We begin with the raw amino-acid sequence, 230 residues long: Cytidylate kinase (230 aa).

Residue 11–19 (GPAAAGKST) coordinates ATP.

The protein belongs to the cytidylate kinase family. Type 1 subfamily.

It localises to the cytoplasm. It carries out the reaction CMP + ATP = CDP + ADP. The enzyme catalyses dCMP + ATP = dCDP + ADP. The chain is Cytidylate kinase from Oceanobacillus iheyensis (strain DSM 14371 / CIP 107618 / JCM 11309 / KCTC 3954 / HTE831).